Reading from the N-terminus, the 524-residue chain is RNA-splicing ligase RtcB homolog 1 (524 aa).

Mn(2+) is bound by residues aspartate 141, cysteine 144, histidine 249, histidine 281, and histidine 372. 248–252 (NHYLE) provides a ligand contact to GMP. Residues 372-373 (HN), 421-424 (GGSM), serine 428, 447-450 (HGAG), and lysine 523 each bind GMP. The active-site GMP-histidine intermediate is histidine 447.

Belongs to the RtcB family. In terms of assembly, catalytic component of the tRNA-splicing ligase complex. Mn(2+) serves as cofactor.

It carries out the reaction a 3'-end 3'-phospho-ribonucleotide-RNA + a 5'-end dephospho-ribonucleoside-RNA + GTP = a ribonucleotidyl-ribonucleotide-RNA + GMP + diphosphate. The enzyme catalyses a 3'-end 2',3'-cyclophospho-ribonucleotide-RNA + a 5'-end dephospho-ribonucleoside-RNA + GTP + H2O = a ribonucleotidyl-ribonucleotide-RNA + GMP + diphosphate + H(+). Catalytic subunit of the tRNA-splicing ligase complex that acts by directly joining spliced tRNA halves to mature-sized tRNAs by incorporating the precursor-derived splice junction phosphate into the mature tRNA as a canonical 3',5'-phosphodiester. May act as an RNA ligase with broad substrate specificity, and may function toward other RNAs. This is RNA-splicing ligase RtcB homolog 1 from Entamoeba histolytica (strain ATCC 30459 / HM-1:IMSS / ABRM).